The primary structure comprises 95 residues: Co-chaperonin GroES (95 aa).

The protein belongs to the GroES chaperonin family. Heptamer of 7 subunits arranged in a ring. Interacts with the chaperonin GroEL.

It localises to the cytoplasm. In terms of biological role, together with the chaperonin GroEL, plays an essential role in assisting protein folding. The GroEL-GroES system forms a nano-cage that allows encapsulation of the non-native substrate proteins and provides a physical environment optimized to promote and accelerate protein folding. GroES binds to the apical surface of the GroEL ring, thereby capping the opening of the GroEL channel. This is Co-chaperonin GroES from Francisella tularensis subsp. holarctica (strain FTNF002-00 / FTA).